Here is a 129-residue protein sequence, read N- to C-terminus: uncharacterized protein (129 aa).

Transmembrane regions (helical) follow at residues 15-35 (IFIIIVDNEAFLHFSCLIFVF), 48-68 (IFSFFFLTRRFSFIVVIYYFF), and 107-127 (INIFLPPFALTVVQFLVNLVC).

It localises to the membrane. This is an uncharacterized protein from Saccharomyces cerevisiae (strain ATCC 204508 / S288c) (Baker's yeast).